The following is a 56-amino-acid chain: GSICLEPKVVGPCTAYFPRFYFDSETGKCTPFIYGGCEGNSYVDEKLHACRAICRA.

The 51-residue stretch at 4 to 54 (CLEPKVVGPCTAYFPRFYFDSETGKCTPFIYGGCEGNSYVDEKLHACRAIC) folds into the BPTI/Kunitz inhibitor domain. Disulfide bonds link C4-C54, C13-C37, and C29-C50.

This sequence belongs to the venom Kunitz-type family. Sea anemone type 2 potassium channel toxin subfamily.

It is found in the secreted. The protein resides in the nematocyst. Serine protease inhibitor that acts on trypsin. This is PI-stichotoxin-Hcr2a from Radianthus crispa (Leathery sea anemone).